A 545-amino-acid polypeptide reads, in one-letter code: MFILNNRKWRKLKRDPSAFFRDSKFNFLRYFSAKKFAKNFKNSSHIHKTNISKAQSNISSTLKQNRKQDMLIPINFFNFEYIVKELNNQNAIGVYILPSNLTLKPALCILESHKEDFLNKFLLTISSENLKLQYKFNGQIKNPKSVNEIWTDLFSIAHVDMKLSTDRTLSSSISQFWFRLEFCKEDKDFILFPTANRYSRKLWKHSIKNNQLFKEGIRNYSEISSLPYEEDHNFDIDLVFTWVNSEDKNWQELYKKYKPDFNSDATSTSRFLSRDELKFALRSWEMNGSFIRKIFIVSNCAPPAWLDLNNPKIQWVYHEEIMPQSALPTFSSHAIETSLHHIPGISNYFIYSNDDFLLTKPLNKDNFFYSNGIAKLRLEAWGNVNGECTEGEPDYLNGARNANTLLEKEFKKFTTKLHTHSPQSMRTDILFEMEKKYPEEFNRTLHNKFRSLDDIAVTGYLYHHYALLSGRALQSSDKTELVQQNHDFKKKLNNVVTLTKERNFDKLPLSVCINDGADSHLNEEWNVQVIKFLETLFPLPSSFEK.

It belongs to the stealth family.

In terms of biological role, may be the polymerase that links individual UDP-N-acetyl-D-mannosamine monomers. In serotype A the capsule is composed of repeated units of (alpha 1-6)-linked N-acetyl-D-mannosamine-1-phosphate. The polypeptide is Capsular polysaccharide phosphotransferase SacB (sacB) (Neisseria meningitidis serogroup A).